A 60-amino-acid chain; its full sequence is Large ribosomal subunit protein uL30 (60 aa).

This sequence belongs to the universal ribosomal protein uL30 family. In terms of assembly, part of the 50S ribosomal subunit.

This chain is Large ribosomal subunit protein uL30, found in Lactobacillus johnsonii (strain CNCM I-12250 / La1 / NCC 533).